The following is a 48-amino-acid chain: Large ribosomal subunit protein bL33B (48 aa).

The protein belongs to the bacterial ribosomal protein bL33 family.

The polypeptide is Large ribosomal subunit protein bL33B (rpmG2) (Mycoplasma pneumoniae (strain ATCC 29342 / M129 / Subtype 1) (Mycoplasmoides pneumoniae)).